We begin with the raw amino-acid sequence, 785 residues long: Mitochondrial intermediate peptidase (785 aa).

The N-terminal 43 residues, 1 to 43 (MLTRPAQNALLKSMQPLFRFRGCLLAKSTSTPRRDISTSSRKL), are a transit peptide targeting the mitochondrion. H567 contacts Zn(2+). E568 is an active-site residue. The Zn(2+) site is built by H571 and H574.

This sequence belongs to the peptidase M3 family. The cofactor is Zn(2+).

It localises to the mitochondrion matrix. The catalysed reaction is Release of an N-terminal octapeptide as second stage of processing of some proteins imported into the mitochondrion.. In terms of biological role, cleaves proteins, imported into the mitochondrion, to their mature size. While most mitochondrial precursor proteins are processed to the mature form in one step by mitochondrial processing peptidase (MPP), the sequential cleavage by MIP of an octapeptide after initial processing by MPP is a required step for a subgroup of nuclear-encoded precursor proteins destined for the matrix or the inner membrane. The protein is Mitochondrial intermediate peptidase (OCT1) of Pleurotus djamor (Pink oyster mushroom).